Here is a 127-residue protein sequence, read N- to C-terminus: Small ribosomal subunit protein uS11 (127 aa).

The protein belongs to the universal ribosomal protein uS11 family. Part of the 30S ribosomal subunit. Interacts with proteins S7 and S18. Binds to IF-3.

Located on the platform of the 30S subunit, it bridges several disparate RNA helices of the 16S rRNA. Forms part of the Shine-Dalgarno cleft in the 70S ribosome. This chain is Small ribosomal subunit protein uS11, found in Rickettsia africae (strain ESF-5).